Here is a 198-residue protein sequence, read N- to C-terminus: Large ribosomal subunit protein bL27c (198 aa).

A chloroplast-targeting transit peptide spans 1-58 (MAMATSMSLNLIGAFKGLSLSSTSSFLRGDLSFSPKTSFTVTLPLENLQAPIPLTIES).

This sequence belongs to the bacterial ribosomal protein bL27 family. Part of the 50S ribosomal subunit.

Its subcellular location is the plastid. The protein localises to the chloroplast. The sequence is that of Large ribosomal subunit protein bL27c (RPL27) from Arabidopsis thaliana (Mouse-ear cress).